Here is a 419-residue protein sequence, read N- to C-terminus: Serine hydroxymethyltransferase (419 aa).

(6S)-5,6,7,8-tetrahydrofolate-binding positions include L121 and 125 to 127; that span reads GHL. K230 is subject to N6-(pyridoxal phosphate)lysine. (6S)-5,6,7,8-tetrahydrofolate-binding positions include E246 and 355-357; that span reads SPF.

It belongs to the SHMT family. In terms of assembly, homodimer. Requires pyridoxal 5'-phosphate as cofactor.

It localises to the cytoplasm. The enzyme catalyses (6R)-5,10-methylene-5,6,7,8-tetrahydrofolate + glycine + H2O = (6S)-5,6,7,8-tetrahydrofolate + L-serine. Its pathway is one-carbon metabolism; tetrahydrofolate interconversion. It participates in amino-acid biosynthesis; glycine biosynthesis; glycine from L-serine: step 1/1. In terms of biological role, catalyzes the reversible interconversion of serine and glycine with tetrahydrofolate (THF) serving as the one-carbon carrier. This reaction serves as the major source of one-carbon groups required for the biosynthesis of purines, thymidylate, methionine, and other important biomolecules. Also exhibits THF-independent aldolase activity toward beta-hydroxyamino acids, producing glycine and aldehydes, via a retro-aldol mechanism. The polypeptide is Serine hydroxymethyltransferase (Streptococcus suis (strain 98HAH33)).